The chain runs to 672 residues: MSYPSLFAPLDLGFTTLKNRVLMGSMHTGLEEYPDGAERLAAFYAERARHGVALIVSGGIAPDLTGVGMEGGAMLNDASQIPHHRTITEAVHQEGGKIALQILHTGRYSYQPHLVAPSALQAPINRFVPHELSHEEILQLIDNFARCAQLAREAGYDGVEVMGSEGYLINEFLTLRTNQRSDQWGGDYRNRMRFAVEVVRAVRERVGNDFIIIYRLSMLDLVEDGGTFAETVELAQAIEAAGATIINTGIGWHEARIPTIATPVPRGAFSWVTRKLKGHVSLPLVTTNRINDPQVADDILSRGDADMVSMARPFLADAELLSKAQSGRADEINTCIGCNQACLDQIFVGKVTSCLVNPRACHETKMPILPAVQKKNLAVVGAGPAGLAFAINAAARGHQVTLFDAHSEIGGQFNIAKQIPGKEEFYETLRYYRRMIEVTGVTLKLNHTVTADQLQAFDETILASGIVPRTPPIDGIDHPKVLSYLDVLRDKAPVGNKVAIIGCGGIGFDTAMYLSQPGESTSQNIAGFCNEWGIDSSLQQAGGLSPQGMQIPRSPRQIVMLQRKASKPGQGLGKTTGWIHRTTLLSRGVKMIPGVSYQKIDDDGLHVVINGETQVLAVDNVVICAGQEPNRALAQPLIDSGKTVHLIGGCDVAMELDARRAIAQGTRLALEI.

Residues 25-27, G59, and Q101 contribute to the FMN site; that span reads SMH. The Proton donor role is filled by Y167. Position 176 (R176) interacts with substrate. Residue R215 coordinates FMN. 253–256 contacts substrate; the sequence is HEAR. FMN contacts are provided by residues R289 and 311 to 312; that span reads AR. 2 residues coordinate [4Fe-4S] cluster: C335 and C338. Q340 contributes to the FAD binding site. Q340 is an NADP(+) binding site. Residues C342 and C354 each contribute to the [4Fe-4S] cluster site. A385, D404, Q412, K422, and V449 together coordinate FAD. 563–564 contributes to the NADP(+) binding site; the sequence is RK. Substrate is bound by residues K567 and W578. FAD contacts are provided by residues G649 and 656–658; that span reads LDA. 654 to 656 is a binding site for NADP(+); the sequence is MEL.

It in the N-terminal section; belongs to the NADH:flavin oxidoreductase/NADH oxidase family. As to quaternary structure, monomer. It depends on FMN as a cofactor. The cofactor is FAD. [4Fe-4S] cluster is required as a cofactor.

The catalysed reaction is a 4,5-saturated-(2E)-enoyl-CoA + NADP(+) = a (2E,4E)-dienoyl-CoA + NADPH + H(+). It catalyses the reaction a (2E,4Z)-dienoyl-CoA + NADPH + H(+) = a 4,5-saturated-(2E)-enoyl-CoA + NADP(+). It carries out the reaction (2E)-decenoyl-CoA + NADP(+) = (2E,4E)-decadienoyl-CoA + NADPH + H(+). The enzyme catalyses (2E)-decenoyl-CoA + NADP(+) = (2E,4Z)-decadienoyl-CoA + NADPH + H(+). Its pathway is lipid metabolism; fatty acid beta-oxidation. With respect to regulation, is non-competitively inhibited by NADH. In terms of biological role, functions as an auxiliary enzyme in the beta-oxidation of unsaturated fatty acids with double bonds at even carbon positions. Catalyzes the NADPH-dependent reduction of the C4-C5 double bond of the acyl chain of 2,4-dienoyl-CoA to yield 2-trans-enoyl-CoA. Acts on both isomers, 2-trans,4-cis- and 2-trans,4-trans-decadienoyl-CoA, with almost equal efficiency. Is not active with NADH instead of NADPH. Does not show cis-&gt;trans isomerase activity. The polypeptide is 2,4-dienoyl-CoA reductase [(2E)-enoyl-CoA-producing] (Escherichia coli (strain K12)).